A 189-amino-acid polypeptide reads, in one-letter code: MASKRALVILAKGAEEMETVIPVDVMRRAGIKVTVAGLAGKDPVQCSRDVMICPDTSLEDAKTQGPYDVVVLPGGNLGAQNLSESPMVKEILKEQESRKGLIAAICAGPTALLAHEVGFGCKVTTHPLAKDKMMNGSHYSYSESRVEKDGLILTSRGPGTSFEFALAIVEALVGKDMANQVKAPLVLKD.

Alanine 2 carries the post-translational modification N-acetylalanine. S-palmitoyl cysteine attachment occurs at residues cysteine 46 and cysteine 53. Tyrosine 67 is subject to Phosphotyrosine. The Nucleophile role is filled by cysteine 106. At cysteine 106 the chain carries Cysteine sulfinic acid (-SO2H); alternate. The S-palmitoyl cysteine; alternate moiety is linked to residue cysteine 106. Histidine 126 is a catalytic residue. Lysine 130 participates in a covalent cross-link: Glycyl lysine isopeptide (Lys-Gly) (interchain with G-Cter in SUMO). N6-acetyllysine is present on lysine 148. At lysine 182 the chain carries N6-succinyllysine.

Belongs to the peptidase C56 family. In terms of assembly, homodimer. Binds EFCAB6/DJBP and PIAS2. Part of a ternary complex containing PARK7, EFCAB6/DJBP and AR. Binds to HIPK1. Interacts (via N-terminus) with OTUD7B. Interacts with BBS1, CLCF1 and MTERF. Interacts (via C-terminus) with NCF1; the interaction is enhanced by LPS and modulates NCF1 phosphorylation and membrane translocation. Interacts with NENF. Requires Deglycase activity does not require glutathione as a cofactor, however, glycated glutathione constitutes a PARK7 substrate. as cofactor. Sumoylated on Lys-130 by PIAS2 or PIAS4; which is essential for cell-growth promoting activity and transforming activity. In terms of processing, undergoes cleavage of a C-terminal peptide and subsequent activation of protease activity in response to oxidative stress. Expressed in erythroblasts and in mature red blood cells from peripheral blood (at protein level). In pancreas, expression is higher in islets than surrounding exocrine tissues.

The protein localises to the cell membrane. The protein resides in the cytoplasm. It localises to the membrane raft. It is found in the nucleus. Its subcellular location is the mitochondrion. The protein localises to the endoplasmic reticulum. The enzyme catalyses N(omega)-(1-hydroxy-2-oxopropyl)-L-arginyl-[protein] + H2O = lactate + L-arginyl-[protein] + H(+). The catalysed reaction is N(6)-(1-hydroxy-2-oxopropyl)-L-lysyl-[protein] + H2O = lactate + L-lysyl-[protein] + H(+). It catalyses the reaction S-(1-hydroxy-2-oxopropyl)-L-cysteinyl-[protein] + H2O = lactate + L-cysteinyl-[protein] + H(+). It carries out the reaction N(omega)-(1-hydroxy-2-oxoethyl)-L-arginyl-[protein] + H2O = L-arginyl-[protein] + glycolate + H(+). The enzyme catalyses N(6)-(1-hydroxy-2-oxoethyl)-L-lysyl-[protein] + H2O = glycolate + L-lysyl-[protein] + H(+). The catalysed reaction is S-(1-hydroxy-2-oxoethyl)-L-cysteinyl-[protein] + H2O = glycolate + L-cysteinyl-[protein] + H(+). It catalyses the reaction N(2)-(1-hydroxy-2-oxopropyl)-dGTP + H2O = lactate + dGTP + H(+). It carries out the reaction N(2)-(1-hydroxy-2-oxopropyl)-GTP + H2O = lactate + GTP + H(+). The enzyme catalyses N(2)-(1-hydroxy-2-oxopropyl)-GDP + H2O = lactate + GDP + H(+). The catalysed reaction is N(2)-(1-hydroxy-2-oxopropyl)-GMP + H2O = lactate + GMP + H(+). It catalyses the reaction N(2)-(1-hydroxy-2-oxoethyl)-dGTP + H2O = dGTP + glycolate + H(+). It carries out the reaction N(2)-(1-hydroxy-2-oxoethyl)-GTP + H2O = glycolate + GTP + H(+). The enzyme catalyses N(2)-(1-hydroxy-2-oxoethyl)-GDP + H2O = glycolate + GDP + H(+). The catalysed reaction is N(2)-(1-hydroxy-2-oxoethyl)-GMP + H2O = glycolate + GMP + H(+). It catalyses the reaction an N(2)-(1-hydroxy-2-oxopropyl)-guanosine in RNA + H2O = a guanosine in RNA + lactate + H(+). It carries out the reaction an N(2)-(1-hydroxy-2-oxopropyl)-2'-deoxyguanosine in DNA + H2O = a 2'-deoxyguanosine in DNA + lactate + H(+). The enzyme catalyses an N(2)-(1-hydroxy-2-oxoethyl)-guanosine in RNA + H2O = a guanosine in RNA + glycolate + H(+). The catalysed reaction is an N(2)-(1-hydroxy-2-oxoethyl)-2'-deoxyguanosine in DNA + H2O = a 2'-deoxyguanosine in DNA + glycolate + H(+). Its function is as follows. Multifunctional protein with controversial molecular function which plays an important role in cell protection against oxidative stress and cell death acting as oxidative stress sensor and redox-sensitive chaperone and protease. It is involved in neuroprotective mechanisms like the stabilization of NFE2L2 and PINK1 proteins, male fertility as a positive regulator of androgen signaling pathway as well as cell growth and transformation through, for instance, the modulation of NF-kappa-B signaling pathway. Has been described as a protein and nucleotide deglycase that catalyzes the deglycation of the Maillard adducts formed between amino groups of proteins or nucleotides and reactive carbonyl groups of glyoxals. But this function is rebuted by other works. As a protein deglycase, repairs methylglyoxal- and glyoxal-glycated proteins, and releases repaired proteins and lactate or glycolate, respectively. Deglycates cysteine, arginine and lysine residues in proteins, and thus reactivates these proteins by reversing glycation by glyoxals. Acts on early glycation intermediates (hemithioacetals and aminocarbinols), preventing the formation of advanced glycation endproducts (AGE) that cause irreversible damage. Also functions as a nucleotide deglycase able to repair glycated guanine in the free nucleotide pool (GTP, GDP, GMP, dGTP) and in DNA and RNA. Is thus involved in a major nucleotide repair system named guanine glycation repair (GG repair), dedicated to reversing methylglyoxal and glyoxal damage via nucleotide sanitization and direct nucleic acid repair. Protects histones from adduction by methylglyoxal, controls the levels of methylglyoxal-derived argininine modifications on chromatin. Able to remove the glycations and restore histone 3, histone glycation disrupts both local and global chromatin architecture by altering histone-DNA interactions as well as histone acetylation and ubiquitination levels. Displays a very low glyoxalase activity that may reflect its deglycase activity. Eliminates hydrogen peroxide and protects cells against hydrogen peroxide-induced cell death. Required for correct mitochondrial morphology and function as well as for autophagy of dysfunctional mitochondria. Plays a role in regulating expression or stability of the mitochondrial uncoupling proteins SLC25A14 and SLC25A27 in dopaminergic neurons of the substantia nigra pars compacta and attenuates the oxidative stress induced by calcium entry into the neurons via L-type channels during pacemaking. Regulates astrocyte inflammatory responses, may modulate lipid rafts-dependent endocytosis in astrocytes and neuronal cells. In pancreatic islets, involved in the maintenance of mitochondrial reactive oxygen species (ROS) levels and glucose homeostasis in an age- and diet dependent manner. Protects pancreatic beta cells from cell death induced by inflammatory and cytotoxic setting. Binds to a number of mRNAs containing multiple copies of GG or CC motifs and partially inhibits their translation but dissociates following oxidative stress. Metal-binding protein able to bind copper as well as toxic mercury ions, enhances the cell protection mechanism against induced metal toxicity. In macrophages, interacts with the NADPH oxidase subunit NCF1 to direct NADPH oxidase-dependent ROS production, and protects against sepsis. This chain is Parkinson disease protein 7 homolog, found in Mus musculus (Mouse).